The sequence spans 287 residues: mRNA-capping enzyme regulatory subunit (287 aa).

The protein belongs to the chordopoxvirinae mRNA-capping enzyme regulatory subunit family. In terms of assembly, heterodimer of a catalytic and a regulatory subunit. Intrinsic methyltransferase activity of the catalytic subunit is weak and needs to be stimulated 30- to 50-fold by the regulatory subunit, which is itself catalytically inert.

It is found in the virion. Its function is as follows. Regulatory subunit of the mRNA cap enzyme which stabilizes the catalytic subunit and enhances its methyltransferase activity through an allosteric mechanism. Heterodimeric mRNA capping enzyme catalyzes the linkage of a N7-methyl-guanosine moiety to the first transcribed nucleotide (cap 0 structure), whereas the polymerase associated VP39 is responsible for a second methylation at the 2'-O position of the ribose (cap 1 structure). In terms of biological role, the heterodimeric enzyme is also involved in early viral gene transcription termination and intermediate viral gene transcription initiation. Early gene transcription termination requires the termination factor VTF, the DNA-dependent ATPase NPH-I and the Rap94 subunit of the viral RNA polymerase, as well as the presence of a specific termination motif. Binds, together with RAP94, to the termination motif 5'-UUUUUNU-3' in the nascent early mRNA. The sequence is that of mRNA-capping enzyme regulatory subunit from Vaccinia virus (strain Ankara) (VACV).